Reading from the N-terminus, the 488-residue chain is Probable glycine dehydrogenase (decarboxylating) subunit 2 (488 aa).

At Lys-274 the chain carries N6-(pyridoxal phosphate)lysine.

Belongs to the GcvP family. C-terminal subunit subfamily. As to quaternary structure, the glycine cleavage system is composed of four proteins: P, T, L and H. In this organism, the P 'protein' is a heterodimer of two subunits. The cofactor is pyridoxal 5'-phosphate.

It carries out the reaction N(6)-[(R)-lipoyl]-L-lysyl-[glycine-cleavage complex H protein] + glycine + H(+) = N(6)-[(R)-S(8)-aminomethyldihydrolipoyl]-L-lysyl-[glycine-cleavage complex H protein] + CO2. In terms of biological role, the glycine cleavage system catalyzes the degradation of glycine. The P protein binds the alpha-amino group of glycine through its pyridoxal phosphate cofactor; CO(2) is released and the remaining methylamine moiety is then transferred to the lipoamide cofactor of the H protein. The polypeptide is Probable glycine dehydrogenase (decarboxylating) subunit 2 (Listeria monocytogenes serovar 1/2a (strain ATCC BAA-679 / EGD-e)).